The following is a 239-amino-acid chain: tRNA (guanine-N(1)-)-methyltransferase (239 aa).

S-adenosyl-L-methionine is bound by residues Gly108 and 127 to 132; that span reads LGDFVL.

The protein belongs to the RNA methyltransferase TrmD family. Homodimer.

The protein localises to the cytoplasm. The catalysed reaction is guanosine(37) in tRNA + S-adenosyl-L-methionine = N(1)-methylguanosine(37) in tRNA + S-adenosyl-L-homocysteine + H(+). Specifically methylates guanosine-37 in various tRNAs. The sequence is that of tRNA (guanine-N(1)-)-methyltransferase from Streptococcus thermophilus (strain CNRZ 1066).